The primary structure comprises 358 residues: MKNLLDFSLDELGELLKPKFRAKQIYEWIYHKNVDDFLQMKNLPLQMREDLANEFYIGGLNVSKCEQSVDGSKKYLFELKDGKTIESVLLPMKDEITDENGEILRHKRYTICVSSQVGCKIGCAFCLTAKGGFVRNLSAGEIVEQIRLIKKINKIPYERRINVVYMGMGEPLNNLENVAKAIKILIQNEGLAISPRRQTISTSGLSSQIKKLGEMNLGVLLAISLHAVNDELREKLMPINRAYNIASIMQAVREFPIDLRKRVMFEYLVMDGVNDSINDAKTLVRLLNGIKAKVNLIYFNPHIGSKFHRPSEENMIKFQDYLSVHGITCTIRQSKGLDISAACGQLREKNLKEKNDNA.

Residue E86 is the Proton acceptor of the active site. The Radical SAM core domain maps to 105 to 338 (RHKRYTICVS…CTIRQSKGLD (234 aa)). C112 and C343 are joined by a disulfide. Residues C119, C123, and C126 each coordinate [4Fe-4S] cluster. Residues 169 to 170 (GE), S201, 224 to 226 (SLH), and N300 contribute to the S-adenosyl-L-methionine site. Residue C343 is the S-methylcysteine intermediate of the active site.

This sequence belongs to the radical SAM superfamily. RlmN family. The cofactor is [4Fe-4S] cluster.

It localises to the cytoplasm. It carries out the reaction adenosine(2503) in 23S rRNA + 2 reduced [2Fe-2S]-[ferredoxin] + 2 S-adenosyl-L-methionine = 2-methyladenosine(2503) in 23S rRNA + 5'-deoxyadenosine + L-methionine + 2 oxidized [2Fe-2S]-[ferredoxin] + S-adenosyl-L-homocysteine. The enzyme catalyses adenosine(37) in tRNA + 2 reduced [2Fe-2S]-[ferredoxin] + 2 S-adenosyl-L-methionine = 2-methyladenosine(37) in tRNA + 5'-deoxyadenosine + L-methionine + 2 oxidized [2Fe-2S]-[ferredoxin] + S-adenosyl-L-homocysteine. Its function is as follows. Specifically methylates position 2 of adenine 2503 in 23S rRNA and position 2 of adenine 37 in tRNAs. m2A2503 modification seems to play a crucial role in the proofreading step occurring at the peptidyl transferase center and thus would serve to optimize ribosomal fidelity. The protein is Dual-specificity RNA methyltransferase RlmN of Campylobacter hominis (strain ATCC BAA-381 / DSM 21671 / CCUG 45161 / LMG 19568 / NCTC 13146 / CH001A).